A 676-amino-acid chain; its full sequence is Palmitoyl-CoA ligase FUM16 (676 aa).

Position 245–256 (245–256) interacts with AMP; that stretch reads IMYTSGSTGLPN. The segment at 552-655 is AMP-binding; sequence KLESIYRTSQ…SGLVTPTMKL (104 aa).

It belongs to the ATP-dependent AMP-binding enzyme family.

The protein localises to the endoplasmic reticulum. It participates in mycotoxin biosynthesis. In terms of biological role, palmitoyl-CoA ligase; part of the gene cluster that mediates the biosynthesis of fumonisins B1 (FB1), B2 (FB2), B3 (FB3), and B4 (FB4), which are carcinogenic mycotoxins. Plays a role in the synthesis of ceramide and is involved in self-protection from fumonisin B1 toxicity. The biosynthesis starts with the FUM1-catalyzed carbon chain assembly from one molecule of acetyl-CoA, eight molecules of malonyl-CoA, and two molecules of methionine (in S-adenosyl form). The C18 polyketide chain is released from the enzyme by a nucleophilic attack of a carbanion, which is derived from R-carbon of alanine by decarboxylation, on the carbonyl carbon of polyketide acyl chain. This step is catalyzed by the pyridoxal 5'-phosphate-dependent aminoacyl transferase FUM8. The resultant 3-keto intermediate is then stereospecifically reduced to a 3-hydroxyl product by reductase FUM13. Subsequent oxidations at C-10 by the cytochrome P450 monooxygenase FUM2, C-14 and C-15 by FUM6, FUM12 or FUM15, tricarballylic esterification of the hydroxyl groups on C-14 and C-15 by acyltransferase FUM14, and C-5 hydroxylation by 2-keto-glutarate-dependent dioxygenase FUM3 furnish the biosynthesis of fumonisins. The tricarballylic moieties are most likely derived from the citric acid cycle, and their addition to the carbon backbone may involve FUM7, FUM10, FUM11 and FUM14. This Gibberella moniliformis (strain M3125 / FGSC 7600) (Maize ear and stalk rot fungus) protein is Palmitoyl-CoA ligase FUM16.